Here is a 467-residue protein sequence, read N- to C-terminus: MAEDTKDTTSSNQMWGGRFASGPAAIMEEINASIGFDKKLYAQDIRGSIAHATMLAHQGIISGEDKDKIVTGLNTILSEIEAGQFTFSRKLEDIHMNIEARLADLIGPAAGRLHTARSRNDQVALDFRLWVKEELQKAESLLTDLIAAFLDRAEEHAETVMPGFTHLQTAQPVTFGHHCMAYVEMFGRDRQRVRHAIEHLDESPIGAAALAGTGYAIDRHMTAKALGFREPTRNSIDTVSDRDFALEFLSIAAISAVHLSRLAEEIVIWSTPQFGFIRLSDAFSTGSSIMPQKKNPDAAELVRAKTGRINGSLIALLTIMKGLPLAYSKDMQEDKEQVFDAAESLELALAAMTGMIRDMTVRADRMKAAAGSGFSTATDLADWLVREAGLPFRDAHHVTGRVVALAEEKGCDLADLPLEDLQAIHTAITADIYSVLTVEASVASRKSYGGTAPDEVRKQIKWWRGRN.

It belongs to the lyase 1 family. Argininosuccinate lyase subfamily.

Its subcellular location is the cytoplasm. It carries out the reaction 2-(N(omega)-L-arginino)succinate = fumarate + L-arginine. It functions in the pathway amino-acid biosynthesis; L-arginine biosynthesis; L-arginine from L-ornithine and carbamoyl phosphate: step 3/3. The protein is Argininosuccinate lyase of Allorhizobium ampelinum (strain ATCC BAA-846 / DSM 112012 / S4) (Agrobacterium vitis (strain S4)).